The chain runs to 1311 residues: MSRRKQAKPRSLKDPNCKLEDKTEDGEALDCKKRPEDGEELEDEAVHSCDSCLQVFESLSDITEHKINQCQLTDGVDVEDDPTCSWPASSPSSKDQTSPSHGEGCDFGEEEGGPGLPYPCQFCDKSFSRLSYLKHHEQSHSDKLPFKCTYCSRLFKHKRSRDRHIKLHTGDKKYHCSECDAAFSRSDHLKIHLKTHTSNKPYKCAICRRGFLSSSSLHGHMQVHERNKDGSQSGSRMEDWKMKDTQKCSQCEEGFDFPEDLQKHIAECHPECSPNEDRAALQCVYCHELFVEETSLMNHMEQVHSGEKKNSCSICSESFHTVEELYSHMDSHQQPESCNHSNSPSLVTVGYTSVSSTTPDSNLSVDSSTMVEAAPPIPKSRGRKRAAQQTPDMTGPSSKQAKVTYSCIYCNKQLFSSLAVLQIHLKTMHLDKPEQAHICQYCLEVLPSLYNLNEHLKQVHEAQDPGLIVSAMPAIVYQCNFCSEVVNDLNTLQEHIRCSHGFANPAAKDSNAFFCPHCYMGFLTDSSLEEHIRQVHCDLSGSRFGSPVLGTPKEPVVEVYSCSYCTNSPIFNSVLKLNKHIKENHKNIPLALNYIHNGKKSRALSPLSPVAIEQTSLKMMQAVGGAPARPTGEYICNQCGAKYTSLDSFQTHLKTHLDTVLPKLTCPQCNKEFPNQESLLKHVTIHFMITSTYYICESCDKQFTSVDDLQKHLLDMHTFVFFRCTLCQEVFDSKVSIQLHLAVKHSNEKKVYRCTSCNWDFRNETDLQLHVKHNHLENQGKVHKCIFCGESFGTEVELQCHITTHSKKYNCKFCSKAFHAIILLEKHLREKHCVFETKTPNCGTNGASEQVQKEEVELQTLLTNSQESHNSHDGSEEDVDTSEPMYGCDICGAAYTMETLLQNHQLRDHNIRPGESAIVKKKAELIKGNYKCNVCSRTFFSENGLREHMQTHLGPVKHYMCPICGERFPSLLTLTEHKVTHSKSLDTGNCRICKMPLQSEEEFLEHCQMHPDLRNSLTGFRCVVCMQTVTSTLELKIHGTFHMQKTGNGSAVQTTGRGQHVQKLYKCASCLKEFRSKQDLVKLDINGLPYGLCAGCVNLSKSASPGINVPPGTNRPGLGQNENLSAIEGKGKVGGLKTRCSSCNVKFESESELQNHIQTIHRELVPDSNSTQLKTPQVSPMPRISPSQSDEKKTYQCIKCQMVFYNEWDIQVHVANHMIDEGLNHECKLCSQTFDSPAKLQCHLIEHSFEGMGGTFKCPVCFTVFVQANKLQQHIFSAHGQEDKIYDCTQCPQKFFFQTELQNHTMTQHSS.

Residues 1 to 10 (MSRRKQAKPR) show a composition bias toward basic residues. The tract at residues 1-37 (MSRRKQAKPRSLKDPNCKLEDKTEDGEALDCKKRPED) is disordered. A compositionally biased stretch (basic and acidic residues) spans 11 to 21 (SLKDPNCKLED). A C2H2-type 1; degenerate zinc finger spans residues 47 to 67 (HSCDSCLQVFESLSDITEHKI). Residues 81 to 108 (DPTCSWPASSPSSKDQTSPSHGEGCDFG) are disordered. Residues 87-102 (PASSPSSKDQTSPSHG) show a composition bias toward low complexity. 7 C2H2-type zinc fingers span residues 118–140 (YPCQ…EQSH), 146–168 (FKCT…IKLH), 174–196 (YHCS…LKTH), 202–224 (YKCA…MQVH), 246–269 (QKCS…AECH), 281–304 (LQCV…EQVH), and 310–332 (NSCS…MDSH). Residues 349 to 358 (VGYTSVSSTT) are compositionally biased toward low complexity. Residues 349–397 (VGYTSVSSTTPDSNLSVDSSTMVEAAPPIPKSRGRKRAAQQTPDMTGPS) form a disordered region. Polar residues-rich tracts occupy residues 359–370 (PDSNLSVDSSTM) and 387–397 (AQQTPDMTGPS). The C2H2-type 9; degenerate zinc finger occupies 405 to 429 (YSCIYCNKQLFSSLAVLQIHLKTMH). 3 C2H2-type zinc fingers span residues 437–460 (HICQ…KQVH), 477–500 (YQCN…RCSH), and 513–536 (FFCP…RQVH). Serine 546 is modified (phosphoserine). Residues 560 to 585 (YSCSYCTNSPIFNSVLKLNKHIKENH) form a C2H2-type 13; atypical zinc finger. Phosphoserine is present on residues serine 605 and serine 608. C2H2-type zinc fingers lie at residues 634–656 (YICN…LKTH), 664–686 (LTCP…VTIH), 694–717 (YICE…LDMH), 722–745 (FRCT…AVKH), 752–775 (YRCT…KHNH), 783–805 (HKCI…ITTH), and 809–832 (YNCK…REKH). Residues 863–882 (TNSQESHNSHDGSEEDVDTS) form a disordered region. The C2H2-type 21; degenerate zinc-finger motif lies at 886 to 908 (YGCDICGAAYTMETLLQNHQLRD). C2H2-type zinc fingers lie at residues 930–952 (YKCN…MQTH), 959–981 (YMCP…KVTH), and 1020–1042 (FRCV…GTFH). Residues 1065 to 1083 (YKCASCLKEFRSKQDLVKL) form a C2H2-type 25; degenerate zinc finger. The C2H2-type 26 zinc finger occupies 1138 to 1161 (TRCSSCNVKFESESELQNHIQTIH). Lysine 1146 is covalently cross-linked (Glycyl lysine isopeptide (Lys-Gly) (interchain with G-Cter in SUMO2)). Residues 1168–1178 (SNSTQLKTPQV) are compositionally biased toward polar residues. Residues 1168–1188 (SNSTQLKTPQVSPMPRISPSQ) form a disordered region. C2H2-type zinc fingers lie at residues 1195 to 1217 (YQCI…VANH), 1225 to 1247 (HECK…LIEH), 1256 to 1279 (FKCP…FSAH), and 1286 to 1309 (YDCT…MTQH).

The protein belongs to the krueppel C2H2-type zinc-finger protein family. As to quaternary structure, interacts with EBF1. Interacts with SMAD1 and SMAD4. As to expression, predominantly expressed in hematopoietic cells. Present in organs and tissues that contain stem and progenitor cells, myeloid and/or lymphoid: placenta, spleen, lymph nodes, thymus, bone marrow and fetal liver. Within the hematopoietic system, it is abundant in CD34(+) cells but undetectable in mature peripheral blood leukocytes, and its levels rapidly decrease during the differentiation of CD34(+) cells in response to hemopoietins.

Its subcellular location is the nucleus. Functionally, transcription factor that can both act as an activator or a repressor depending on the context. Involved in BMP signaling and in the regulation of the immature compartment of the hematopoietic system. Associates with SMADs in response to BMP2 leading to activate transcription of BMP target genes. Acts as a transcriptional repressor via its interaction with EBF1, a transcription factor involved specification of B-cell lineage; this interaction preventing EBF1 to bind DNA and activate target genes. The protein is Zinc finger protein 521 (ZNF521) of Homo sapiens (Human).